Reading from the N-terminus, the 100-residue chain is Large ribosomal subunit protein bL21 (100 aa).

It belongs to the bacterial ribosomal protein bL21 family. In terms of assembly, part of the 50S ribosomal subunit. Contacts protein L20.

Functionally, this protein binds to 23S rRNA in the presence of protein L20. In Deinococcus deserti (strain DSM 17065 / CIP 109153 / LMG 22923 / VCD115), this protein is Large ribosomal subunit protein bL21.